A 353-amino-acid chain; its full sequence is Protein Wnt-11b-1 (353 aa).

Residues 1 to 22 (MAQIHHCVTLLLILCCSGLCGA) form the signal peptide. N31, N38, and N88 each carry an N-linked (GlcNAc...) asparagine glycan. 5 disulfides stabilise this stretch: C78/C89, C128/C136, C138/C155, C208/C222, and C210/C217. S214 carries the O-palmitoleoyl serine; by PORCN lipid modification. Sulfotyrosine is present on residues Y274 and Y281. Disulfide bonds link C282–C313, C298–C308, C312–C352, C328–C343, C330–C340, and C335–C336. An N-linked (GlcNAc...) asparagine glycan is attached at N299.

It belongs to the Wnt family. Homodimer. Secreted homodimers form a complex with wnt5a homodimers; tyrosine sulfation of both wnt11 and wnt5a by tpst1 is required for this interaction. Interacts with the transmembrane receptor fzd7/fz7. Interacts with lrp6 and ryk. Interacts with tdgf1/frl1. Interacts weakly with frzb1 and strongly with frzb2/crescent. Interaction with frzb2/crescent antagonizes wnt11 function in the neuroectoderm, but enhances it in mesodermal tissue. Post-translationally, glycosylation is required for protein secretion. In terms of processing, palmitoleoylation is required for efficient binding to frizzled receptors. Depalmitoleoylation leads to Wnt signaling pathway inhibition.

It is found in the secreted. The protein localises to the extracellular space. The protein resides in the extracellular matrix. Functionally, ligand for the frizzled7 transmembrane receptor. Primarily acts via non-canonical Wnt pathways mediated by either Ca(2+) and PKC, or by JNK and dvl2/dsh. Depending on the cellular context, can also signal via the canonical Wnt pathway mediated by beta-catenin and dvl2/dsh. May also inhibit canonical Wnt signaling. Maternally initiates dorsal/ventral axis formation by a canonical route, which signals via lrp6. In a complex with wnt5a, activates the canonical and non-canonical processes involved in axis formation. In the non-canonical pathway, acts through fzd7/fz7 to induce phosphorylation of dvl2/dsh. Signals through a non-canonical Wnt pathway to regulate convergent extension movements during gastrulation. Interactions with the secreted Wnt antagonist sfrp5 to coordinate foregut development, acting via a non-canonical wnt pathway whereby sfrp5 restricts wnt11b activity to prevent inappropriate foregut formation. Mediates cardiogenesis via non-canonical Wnt signaling involving JNK-activation and PKC. Acts redundantly with wnt11/wnt11r during pronephros induction. In Xenopus tropicalis (Western clawed frog), this protein is Protein Wnt-11b-1.